The primary structure comprises 736 residues: Catalase-peroxidase (736 aa).

Positions 96–224 form a cross-link, tryptophyl-tyrosyl-methioninium (Trp-Tyr) (with M-250); sequence WHSAGTYRTG…LAAVQMGLIY (129 aa). Catalysis depends on histidine 97, which acts as the Proton acceptor. The tryptophyl-tyrosyl-methioninium (Tyr-Met) (with W-96) cross-link spans 224–250; it reads YVNPEGPDGNPDPVASGRDVRETFGRM. A heme b-binding site is contributed by histidine 265.

It belongs to the peroxidase family. Peroxidase/catalase subfamily. As to quaternary structure, homodimer or homotetramer. Heme b is required as a cofactor. Post-translationally, formation of the three residue Trp-Tyr-Met cross-link is important for the catalase, but not the peroxidase activity of the enzyme.

The enzyme catalyses H2O2 + AH2 = A + 2 H2O. It carries out the reaction 2 H2O2 = O2 + 2 H2O. In terms of biological role, bifunctional enzyme with both catalase and broad-spectrum peroxidase activity. This chain is Catalase-peroxidase, found in Pelobacter propionicus (strain DSM 2379 / NBRC 103807 / OttBd1).